Here is a 132-residue protein sequence, read N- to C-terminus: Small ribosomal subunit protein uS8 (132 aa).

This sequence belongs to the universal ribosomal protein uS8 family. Part of the 30S ribosomal subunit. Contacts proteins S5 and S12.

One of the primary rRNA binding proteins, it binds directly to 16S rRNA central domain where it helps coordinate assembly of the platform of the 30S subunit. The polypeptide is Small ribosomal subunit protein uS8 (Leptospira biflexa serovar Patoc (strain Patoc 1 / Ames)).